The chain runs to 478 residues: Transposon Ty1-H Gag polyprotein (478 aa).

3 stretches are compositionally biased toward polar residues: residues 1–10 (MESQQLSNYP), 48–60 (TKAN…TPAS), and 127–152 (QSQF…GNTF). 3 disordered regions span residues 1–84 (MESQ…QNGP), 126–174 (PQSQ…PPPM), and 390–478 (GSRN…PETY). Over residues 153–165 (TDSSSADSDMTST) the composition is skewed to low complexity. The interval 337–439 (NNGIHINNKV…NSKSKTARAH (103 aa)) is RNA-binding. A compositionally biased stretch (low complexity) spans 440 to 456 (NVSTSNNSPSTDNDSIS). The span at 457 to 466 (KSTTEPIQLN) shows a compositional bias: polar residues. The span at 467–478 (NKHDLHLRPETY) shows a compositional bias: basic and acidic residues.

In terms of assembly, homotrimer.

It localises to the cytoplasm. Capsid protein (CA) is the structural component of the virus-like particle (VLP), forming the shell that encapsulates the retrotransposons dimeric RNA genome. The particles are assembled from trimer-clustered units and there are holes in the capsid shells that allow for the diffusion of macromolecules. CA also has nucleocapsid-like chaperone activity, promoting primer tRNA(i)-Met annealing to the multipartite primer-binding site (PBS), dimerization of Ty1 RNA and initiation of reverse transcription. This is Transposon Ty1-H Gag polyprotein (TY1A-H) from Saccharomyces cerevisiae (strain ATCC 204508 / S288c) (Baker's yeast).